A 366-amino-acid polypeptide reads, in one-letter code: tRNA pseudouridine synthase B (366 aa).

Asp-44 functions as the Nucleophile in the catalytic mechanism.

Belongs to the pseudouridine synthase TruB family. Type 1 subfamily.

The catalysed reaction is uridine(55) in tRNA = pseudouridine(55) in tRNA. Responsible for synthesis of pseudouridine from uracil-55 in the psi GC loop of transfer RNAs. The chain is tRNA pseudouridine synthase B from Treponema pallidum (strain Nichols).